The sequence spans 785 residues: Proprotein convertase subtilisin/kexin type 7 (785 aa).

Positions Met1–Gly37 are cleaved as a signal peptide. Positions Leu38–Arg141 are excised as a propeptide. Residues Ser142–Thr667 are Extracellular-facing. A Peptidase S8 domain is found at Gln153–Val473. N-linked (GlcNAc...) asparagine glycans are attached at residues Asn167 and Asn175. The active-site Charge relay system is the Asp187. The segment at Ile197–His219 is disordered. His228 serves as the catalytic Charge relay system. Asn241 carries an N-linked (GlcNAc...) asparagine glycan. Ser406 functions as the Charge relay system in the catalytic mechanism. The region spanning Ser481–Ser618 is the P/Homo B domain. Asn511 carries N-linked (GlcNAc...) asparagine glycosylation. A helical membrane pass occupies residues Leu668–Leu688. The Cytoplasmic portion of the chain corresponds to Ser689–Cys785. The interval Arg700–Asp751 is disordered.

Belongs to the peptidase S8 family. Requires Ca(2+) as cofactor. In terms of processing, cysteine residues in the cytoplasmic tail are probably palmitoylated. Post-translationally, N-glycosylated. Expressed in spleen, thymus, prostate, testis, ovary, small intestine, colon and peripheral blood leukocyte.

The protein resides in the golgi apparatus. Its subcellular location is the trans-Golgi network membrane. Its activity is regulated as follows. Inhibited by zinc and copper. Its function is as follows. Serine endoprotease that processes various proproteins by cleavage at paired basic amino acids, recognizing the RXXX[KR]R consensus motif. Likely functions in the constitutive secretory pathway. This Homo sapiens (Human) protein is Proprotein convertase subtilisin/kexin type 7 (PCSK7).